We begin with the raw amino-acid sequence, 70 residues long: Conotoxin Cal6.11 (70 aa).

Positions 1 to 22 (MKLTCVLIIAVLILTACQFIAA) are cleaved as a signal peptide. Residues 23 to 43 (DNTEYRKWRRSGTSTGMRLGS) constitute a propeptide that is removed on maturation. Disulfide bonds link C46–C57, C50–C62, and C56–C69. A 4-hydroxyproline mark is found at P48 and P58. A 4-carboxyglutamate mark is found at E60 and E67.

The protein belongs to the conotoxin O1 superfamily. As to expression, expressed by the venom duct.

The protein resides in the secreted. Probable neurotoxin with unknown target. Possibly targets ion channels. This is Conotoxin Cal6.11 from Californiconus californicus (California cone).